A 712-amino-acid polypeptide reads, in one-letter code: Polyribonucleotide nucleotidyltransferase (712 aa).

Residues Asp487 and Asp493 each contribute to the Mg(2+) site. One can recognise a KH domain in the interval 554-613 (PKIITMTINPDKIRDVIGPSGKQINKIIEETGVKIDIEQDGTVFISSINQEMNDKAKKII). Residues 623–691 (GEIYEGKVKR…KQGRVNLSRK (69 aa)) form the S1 motif domain.

The protein belongs to the polyribonucleotide nucleotidyltransferase family. The cofactor is Mg(2+).

It localises to the cytoplasm. The catalysed reaction is RNA(n+1) + phosphate = RNA(n) + a ribonucleoside 5'-diphosphate. Functionally, involved in mRNA degradation. Catalyzes the phosphorolysis of single-stranded polyribonucleotides processively in the 3'- to 5'-direction. The sequence is that of Polyribonucleotide nucleotidyltransferase from Bacillus cereus (strain 03BB102).